Here is a 187-residue protein sequence, read N- to C-terminus: Nicotinamide-nucleotide adenylyltransferase (187 aa).

Belongs to the archaeal NMN adenylyltransferase family.

The protein localises to the cytoplasm. The catalysed reaction is beta-nicotinamide D-ribonucleotide + ATP + H(+) = diphosphate + NAD(+). It functions in the pathway cofactor biosynthesis; NAD(+) biosynthesis; NAD(+) from nicotinamide D-ribonucleotide: step 1/1. This is Nicotinamide-nucleotide adenylyltransferase from Thermococcus onnurineus (strain NA1).